The following is a 63-amino-acid chain: Cecropin-B (63 aa).

Residues 1-23 form the signal peptide; sequence MNFNKIFVFVALILAISLGNSEA. R62 is modified (arginine amide).

It belongs to the cecropin family. As to expression, strongly expressed in larval, pupal and adult fat body and hemocytes after injection of bacteria. Maximal expression is seen in pupae.

The protein resides in the secreted. Cecropins have lytic and antibacterial activity against several Gram-positive and Gram-negative bacteria. This is Cecropin-B (CecB) from Drosophila melanogaster (Fruit fly).